The chain runs to 174 residues: Co-chaperone protein HscB homolog (174 aa).

Positions 2–74 constitute a J domain; it reads NYFELFKFSP…IRRAEHMLSL (73 aa).

It belongs to the HscB family. As to quaternary structure, interacts with HscA and stimulates its ATPase activity.

Functionally, co-chaperone involved in the maturation of iron-sulfur cluster-containing proteins. Seems to help targeting proteins to be folded toward HscA. The chain is Co-chaperone protein HscB homolog from Shewanella baltica (strain OS185).